The primary structure comprises 318 residues: Tyrosine recombinase XerD (318 aa).

The region spanning 5 to 90 (PSDAKLTGLF…AMRHLYRFLL (86 aa)) is the Core-binding (CB) domain. The Tyr recombinase domain occupies 111 to 310 (GLPKVLSIAD…VEERLKSLVR (200 aa)). Residues R161, K185, H262, R265, and H288 contribute to the active site. Y297 acts as the O-(3'-phospho-DNA)-tyrosine intermediate in catalysis.

The protein belongs to the 'phage' integrase family. XerD subfamily. As to quaternary structure, forms a cyclic heterotetrameric complex composed of two molecules of XerC and two molecules of XerD.

It is found in the cytoplasm. Its function is as follows. Site-specific tyrosine recombinase, which acts by catalyzing the cutting and rejoining of the recombining DNA molecules. The XerC-XerD complex is essential to convert dimers of the bacterial chromosome into monomers to permit their segregation at cell division. It also contributes to the segregational stability of plasmids. In Bradyrhizobium diazoefficiens (strain JCM 10833 / BCRC 13528 / IAM 13628 / NBRC 14792 / USDA 110), this protein is Tyrosine recombinase XerD.